A 1188-amino-acid chain; its full sequence is DNA-directed RNA polymerase subunit beta (1188 aa).

The protein belongs to the RNA polymerase beta chain family. As to quaternary structure, the RNAP catalytic core consists of 2 alpha, 1 beta, 1 beta' and 1 omega subunit. When a sigma factor is associated with the core the holoenzyme is formed, which can initiate transcription.

It catalyses the reaction RNA(n) + a ribonucleoside 5'-triphosphate = RNA(n+1) + diphosphate. Functionally, DNA-dependent RNA polymerase catalyzes the transcription of DNA into RNA using the four ribonucleoside triphosphates as substrates. In Streptococcus pyogenes serotype M18 (strain MGAS8232), this protein is DNA-directed RNA polymerase subunit beta.